The sequence spans 275 residues: Type III pantothenate kinase (275 aa).

ATP is bound at residue 6 to 13 (DAGNTNIV). A substrate-binding site is contributed by 108-111 (GADR). Aspartate 110 acts as the Proton acceptor in catalysis. Aspartate 130 provides a ligand contact to K(+). Threonine 133 provides a ligand contact to ATP. Substrate is bound at residue threonine 187.

Belongs to the type III pantothenate kinase family. As to quaternary structure, homodimer. NH4(+) serves as cofactor. Requires K(+) as cofactor.

Its subcellular location is the cytoplasm. The catalysed reaction is (R)-pantothenate + ATP = (R)-4'-phosphopantothenate + ADP + H(+). It functions in the pathway cofactor biosynthesis; coenzyme A biosynthesis; CoA from (R)-pantothenate: step 1/5. Functionally, catalyzes the phosphorylation of pantothenate (Pan), the first step in CoA biosynthesis. This is Type III pantothenate kinase from Zymomonas mobilis subsp. mobilis (strain ATCC 31821 / ZM4 / CP4).